A 135-amino-acid chain; its full sequence is Large ribosomal subunit protein bL17 (135 aa).

Belongs to the bacterial ribosomal protein bL17 family. As to quaternary structure, part of the 50S ribosomal subunit. Contacts protein L32.

The protein is Large ribosomal subunit protein bL17 of Rhodopseudomonas palustris (strain BisB18).